The following is a 309-amino-acid chain: Taste receptor type 2 member 46 (309 aa).

A topological domain (extracellular) is located at residue Met1. The chain crosses the membrane as a helical span at residues 2–22 (ITFLPIIFSILIVVTFVIGNF). Residues 23 to 46 (ANGFIALANSIEWFKRQKISFADQ) lie on the Cytoplasmic side of the membrane. Residues 47-67 (ILTALAVSRVGLLWVLLLNWY) traverse the membrane as a helical segment. Residues 68–86 (ATELNPAFYSIEVRITAYN) lie on the Extracellular side of the membrane. The chain crosses the membrane as a helical span at residues 87 to 107 (LWAVINHFSNWLATSLSIFYL). Topologically, residues 108-126 (LKIANFSNLIFLRLKRRVK) are cytoplasmic. The helical transmembrane segment at 127–147 (SVVLVILLGPLLFLVCHLFVI) threads the bilayer. At 148-178 (NMNQIIWTKEYEGNMTWKIKLRSAMYLSNIT) the chain is on the extracellular side. Residues Asn161 and Asn176 are each glycosylated (N-linked (GlcNAc...) asparagine). The helical transmembrane segment at 179 to 199 (VTILANLVPFTLTLISFLLLI) threads the bilayer. Topologically, residues 200 to 229 (CSLCKHLKKMQLHGKGSQDPSMKVHIKALQ) are cytoplasmic. A helical membrane pass occupies residues 230-250 (TVTSFLLLCAIYFLSIIMSVW). The Extracellular segment spans residues 251–259 (SFESLENKP). A helical membrane pass occupies residues 260 to 280 (VFMFCEAITFSYPSTHPFILI). The Cytoplasmic portion of the chain corresponds to 281–309 (WGNKKLKQTFLSVLWHVRYWVKGEEPSSP).

Belongs to the G-protein coupled receptor T2R family.

It is found in the membrane. It localises to the cell projection. Its subcellular location is the cilium membrane. In terms of biological role, receptor that may play a role in the perception of bitterness and is gustducin-linked. May play a role in sensing the chemical composition of the gastrointestinal content. The activity of this receptor may stimulate alpha gustducin, mediate PLC-beta-2 activation and lead to the gating of TRPM5. In airway epithelial cells, binding of bitter compounds increases the intracellular calcium ion concentration and stimulates ciliary beat frequency. The polypeptide is Taste receptor type 2 member 46 (TAS2R46) (Pan paniscus (Pygmy chimpanzee)).